Here is a 243-residue protein sequence, read N- to C-terminus: Protein IN2-1 (243 aa).

The tract at residues M1–P26 is disordered. Residues G31–A112 form the GST N-terminal domain. Residues K70, V84, and E96–S97 each bind glutathione. A GST C-terminal domain is found at D109–L240.

Belongs to the GST superfamily. HSP26 family. As to expression, leaves and roots. It is more strongly induced in the leaves relative to the roots.

The chain is Protein IN2-1 (IN2-1) from Zea mays (Maize).